The sequence spans 372 residues: Glutamate 5-kinase (372 aa).

Position 14 (K14) interacts with ATP. 3 residues coordinate substrate: S54, D141, and N153. Position 173 to 174 (173 to 174) interacts with ATP; sequence TD. The PUA domain occupies 280-358; the sequence is RGHVVIDAGA…GEIEAVLGYM (79 aa).

Belongs to the glutamate 5-kinase family.

The protein localises to the cytoplasm. The enzyme catalyses L-glutamate + ATP = L-glutamyl 5-phosphate + ADP. It participates in amino-acid biosynthesis; L-proline biosynthesis; L-glutamate 5-semialdehyde from L-glutamate: step 1/2. Functionally, catalyzes the transfer of a phosphate group to glutamate to form L-glutamate 5-phosphate. This is Glutamate 5-kinase from Burkholderia thailandensis (strain ATCC 700388 / DSM 13276 / CCUG 48851 / CIP 106301 / E264).